Here is a 510-residue protein sequence, read N- to C-terminus: MESMLVAGAGAAAVAAVGGLVAAAALADKLVAAPPPRKNRANPPPAVPGLPIIGNLHQLKEKKPHQTFAKWSETYGPIYTIKTGASPVVVLNSTEVAKEAMIDKFSSISTRKLPKAMSVLTRKSMVAISDYGDYQKMAKRNIMIGMLGFNAQKQFRGTRERMISNVLSTLHKLVSLDPHSPLNFRDVYINELFSLSLIQSLGEDVSSVYVEEFGREISKDEIFDVLVHEMMMCAVEADWRDYFPYLSWLPNKSFDTIVSTTEFRRDAIMNALIKKQKERIARGEARASYIDFLLEAERSAQLTDDQLMLLLSESILAAADTVLVTTEWTMYEIAKNPDKQELLYQEIREACGGEAVTEDDLPRLPYLNAVFHETLRLHSPVPVLPPRFVHDDTTLAGYDIAAGTQMMINVYACHMDEKVWESPGEWSPERFLGEGFEVADRYKTMAFGAGRRTCAGSLQAMNIACVAVARLVQELEWRLREGDGDKEDTMQFTALKLDPLHVHLKPRGRM.

Residues 4 to 24 traverse the membrane as a helical segment; that stretch reads MLVAGAGAAAVAAVGGLVAAA. C454 is a heme binding site.

The protein belongs to the cytochrome P450 family. As to quaternary structure, interacts with the rice dwarf virus (RDV) P2 protein. Heme is required as a cofactor. As to expression, expressed in leaf blades and sheaths, stems and panicles.

Its subcellular location is the membrane. The enzyme catalyses ent-sandaracopimara-8(14),15-diene + reduced [NADPH--hemoprotein reductase] + O2 = ent-sandaracopimaradien-3beta-ol + oxidized [NADPH--hemoprotein reductase] + H2O + H(+). It catalyses the reaction 9beta-pimara-7,15-diene + reduced [NADPH--hemoprotein reductase] + O2 = 9beta-pimara-7,15-diene-3beta-ol + oxidized [NADPH--hemoprotein reductase] + H2O + H(+). Functionally, catalyzes the hydroxylation of ent-sandaracopimaradiene at the C3alpha position to produce ent-3beta-hydroxy-sandaracopimaradiene, an intermediates for the biosynthesis of oryzalexin D and oryzalexin E phytoalexins. Catalyzes the hydroxylation of ent-cassadiene at the C3alpha position to produce 3alpha-hydroxy-ent-cassadiene, which may be an intermediate for the biosynthesis of phytocassane phytoalexins. Catalyzes the hydroxylation of syn-pimaradiene (9-beta-pimara-7,15-diene) at the C3beta position to produce 3-beta-syn-pimaradiene. Can hydroxylate ent-kaurene in vitro, but the product is not ent-kauren-19-ol as expected for ent-kaurene oxidase activity. The sequence is that of Ent-sandaracopimaradiene 3-hydroxylase from Oryza sativa subsp. japonica (Rice).